Reading from the N-terminus, the 472-residue chain is Probable endopolygalacturonase D (472 aa).

The first 16 residues, 1 to 16 (MKRGALLVPFVPLALA), serve as a signal peptide directing secretion. N-linked (GlcNAc...) asparagine glycosylation occurs at N24. Cysteines 129 and 144 form a disulfide. 3 PbH1 repeats span residues 236 to 258 (MYYSRIENLNIQNWPVHCFDIEH), 259 to 297 (TENLIISGITLDNSAGDAPNSASGSKPAAHNSDGFDIKS), and 298 to 319 (STNLTLQNSWVHNQDDCVAVSS). A glycan (N-linked (GlcNAc...) asparagine) is linked at N300. The active-site Proton donor is D312. Cysteines 314 and 330 form a disulfide. The active site involves H334. PbH1 repeat units lie at residues 349–370 (VDGVTFSNSQVINSSNGCRIKS), 378–400 (VSNIRYENITVSGITDYGIDIQQ), 412–433 (TNGVKIENITFVDVTGTMSDGK), and 444–467 (CSNFVFENVGITGGSGDSCNYPTD). N-linked (GlcNAc...) asparagine glycans are attached at residues N361, N385, and N419. Intrachain disulfides connect C439-C444 and C462-C469.

This sequence belongs to the glycosyl hydrolase 28 family.

The protein localises to the secreted. The catalysed reaction is (1,4-alpha-D-galacturonosyl)n+m + H2O = (1,4-alpha-D-galacturonosyl)n + (1,4-alpha-D-galacturonosyl)m.. In terms of biological role, involved in maceration and soft-rotting of plant tissue. Hydrolyzes the 1,4-alpha glycosidic bonds of de-esterified pectate in the smooth region of the plant cell wall. This is Probable endopolygalacturonase D (pgaD) from Neosartorya fischeri (strain ATCC 1020 / DSM 3700 / CBS 544.65 / FGSC A1164 / JCM 1740 / NRRL 181 / WB 181) (Aspergillus fischerianus).